Reading from the N-terminus, the 709-residue chain is Disintegrin and metalloproteinase domain-containing protein 5 (709 aa).

Positions 1–98 (MKTPISSILK…TLSGFIHVIY (98 aa)) are excised as a propeptide. Topologically, residues 1–649 (MKTPISSILK…QQNRGIHPKQ (649 aa)) are extracellular. The 194-residue stretch at 141–334 (RYIKTDIVVD…QDLECLQDLP (194 aa)) folds into the Peptidase M12B domain. Disulfide bonds link C247/C329, C289/C314, C291/C296, C406/C426, C585/C597, C591/C603, and C605/C614. The Disintegrin domain maps to 346-434 (RRICGNGILE…YCVPDTFARN (89 aa)). The EGF-like; calcium-binding domain maps to 581 to 615 (DFQQCNTSRDCNDHGVCNNFNHCHCDKGYNPPYCE). Residues 650-670 (QLQLILYITLPLIMIISAVFI) form a helical membrane-spanning segment. Residues 671–709 (KQSKLSRLCGRERSEGTSCITEDSVSNTKMTTNEGSTLH) lie on the Cytoplasmic side of the membrane. Residues 690–709 (ITEDSVSNTKMTTNEGSTLH) are disordered.

As to quaternary structure, interacts with TEX101. As to expression, detected in testis.

It is found in the membrane. Its function is as follows. This is a non catalytic metalloprotease-like protein. May play a role in sperm-egg fusion. In Rattus norvegicus (Rat), this protein is Disintegrin and metalloproteinase domain-containing protein 5 (Adam5).